Reading from the N-terminus, the 101-residue chain is uncharacterized protein (101 aa).

Residues 70–90 form a helical membrane-spanning segment; sequence VLFIPIILLLPPSCPLTGVTV.

The protein localises to the membrane. This is an uncharacterized protein from Saccharomyces cerevisiae (strain ATCC 204508 / S288c) (Baker's yeast).